A 139-amino-acid chain; its full sequence is Maximins 4/H3 type 4 (139 aa).

The first 18 residues, 1-18 (MNFKYIIAVSFLIASAYA), serve as a signal peptide directing secretion. Positions 19–43 (RSVQNDEQSLSQRDVLEEESLREIR) are excised as a propeptide. Position 70 is an asparagine amide (N70). Residues 74–118 (TAEEHEVMKRLEAVMRDLDSLDHPEEASERETRGFNQDEIAKEKR) constitute a propeptide that is removed on maturation. Position 138 is an isoleucine amide (I138).

This sequence belongs to the bombinin family. In terms of tissue distribution, expressed by the skin glands.

The protein resides in the secreted. Functionally, maximin-4 shows antibacterial activity against both Gram-positive and Gram-negative bacteria. It also shows antimicrobial activity against the fungus C.albicans, but not against A.flavus nor P.uticale. It has little hemolytic activity. It does not possess a significant cytotoxicity against tumor cell lines. It does not possess a significant anti-HIV activity. Its function is as follows. Maximin-H3 shows antibacterial activity against both Gram-positive and Gram-negative bacteria. It also shows antimicrobial activity against the fungus C.albicans. Shows strong hemolytic activity. This Bombina maxima (Giant fire-bellied toad) protein is Maximins 4/H3 type 4.